We begin with the raw amino-acid sequence, 544 residues long: CTP synthase (544 aa).

The amidoligase domain stretch occupies residues 1–265 (MARFIFITGG…DEAVLSAFGI (265 aa)). Residue serine 13 participates in CTP binding. Serine 13 is a binding site for UTP. 14–19 (SLGKGL) serves as a coordination point for ATP. Tyrosine 54 contributes to the L-glutamine binding site. Residue aspartate 71 coordinates ATP. 2 residues coordinate Mg(2+): aspartate 71 and glutamate 139. Residues 146–148 (DIE), 186–191 (KTKPTQ), and lysine 222 each bind CTP. UTP-binding positions include 186–191 (KTKPTQ) and lysine 222. The Glutamine amidotransferase type-1 domain maps to 291-543 (TIGVVGKYVG…IAAALQQSRL (253 aa)). Position 355 (glycine 355) interacts with L-glutamine. Cysteine 382 acts as the Nucleophile; for glutamine hydrolysis in catalysis. Residues 383–386 (LGMQ), glutamate 406, and arginine 471 each bind L-glutamine. Residues histidine 516 and glutamate 518 contribute to the active site.

Belongs to the CTP synthase family. As to quaternary structure, homotetramer.

It catalyses the reaction UTP + L-glutamine + ATP + H2O = CTP + L-glutamate + ADP + phosphate + 2 H(+). The catalysed reaction is L-glutamine + H2O = L-glutamate + NH4(+). The enzyme catalyses UTP + NH4(+) + ATP = CTP + ADP + phosphate + 2 H(+). Its pathway is pyrimidine metabolism; CTP biosynthesis via de novo pathway; CTP from UDP: step 2/2. Allosterically activated by GTP, when glutamine is the substrate; GTP has no effect on the reaction when ammonia is the substrate. The allosteric effector GTP functions by stabilizing the protein conformation that binds the tetrahedral intermediate(s) formed during glutamine hydrolysis. Inhibited by the product CTP, via allosteric rather than competitive inhibition. Its function is as follows. Catalyzes the ATP-dependent amination of UTP to CTP with either L-glutamine or ammonia as the source of nitrogen. Regulates intracellular CTP levels through interactions with the four ribonucleotide triphosphates. In Rhizorhabdus wittichii (strain DSM 6014 / CCUG 31198 / JCM 15750 / NBRC 105917 / EY 4224 / RW1) (Sphingomonas wittichii), this protein is CTP synthase.